The primary structure comprises 303 residues: Putative S-adenosyl-L-methionine-dependent methyltransferase MAB_0213c (303 aa).

S-adenosyl-L-methionine-binding positions include aspartate 126 and aspartate 155–leucine 156.

The protein belongs to the UPF0677 family.

In terms of biological role, exhibits S-adenosyl-L-methionine-dependent methyltransferase activity. The protein is Putative S-adenosyl-L-methionine-dependent methyltransferase MAB_0213c of Mycobacteroides abscessus (strain ATCC 19977 / DSM 44196 / CCUG 20993 / CIP 104536 / JCM 13569 / NCTC 13031 / TMC 1543 / L948) (Mycobacterium abscessus).